A 308-amino-acid chain; its full sequence is ATP synthase gamma chain (308 aa).

It belongs to the ATPase gamma chain family. As to quaternary structure, F-type ATPases have 2 components, CF(1) - the catalytic core - and CF(0) - the membrane proton channel. CF(1) has five subunits: alpha(3), beta(3), gamma(1), delta(1), epsilon(1). CF(0) has three main subunits: a, b and c.

Its subcellular location is the cell membrane. Functionally, produces ATP from ADP in the presence of a proton gradient across the membrane. The gamma chain is believed to be important in regulating ATPase activity and the flow of protons through the CF(0) complex. In Lacticaseibacillus casei (strain BL23) (Lactobacillus casei), this protein is ATP synthase gamma chain.